The sequence spans 184 residues: NADH-quinone oxidoreductase subunit B (184 aa).

Residues Cys-37, Cys-38, Cys-103, and Cys-132 each contribute to the [4Fe-4S] cluster site.

It belongs to the complex I 20 kDa subunit family. In terms of assembly, NDH-1 is composed of 14 different subunits. Subunits NuoB, C, D, E, F, and G constitute the peripheral sector of the complex. It depends on [4Fe-4S] cluster as a cofactor.

It localises to the cell membrane. The enzyme catalyses a quinone + NADH + 5 H(+)(in) = a quinol + NAD(+) + 4 H(+)(out). In terms of biological role, NDH-1 shuttles electrons from NADH, via FMN and iron-sulfur (Fe-S) centers, to quinones in the respiratory chain. The immediate electron acceptor for the enzyme in this species is believed to be a menaquinone. Couples the redox reaction to proton translocation (for every two electrons transferred, four hydrogen ions are translocated across the cytoplasmic membrane), and thus conserves the redox energy in a proton gradient. The sequence is that of NADH-quinone oxidoreductase subunit B from Mycobacterium marinum (strain ATCC BAA-535 / M).